Reading from the N-terminus, the 173-residue chain is MTNWYNVGRLVNTHGVRGEVRVLSNTDFPEERYANGSVLKVAKSPQAEGTLVTVRSHRTHKNFDLLTFEGYNSINEVECFKGSYLYVSEDQLSELDEHEYYYHEIIGCTVVDEEGTKLGKIKDIIETGANDVWVVDRQQRKDLLLPYIEEVVKEVDVENKRIRVHIMEGLDDE.

The PRC barrel domain occupies 97 to 170 (EHEYYYHEII…RIRVHIMEGL (74 aa)).

This sequence belongs to the RimM family. Binds ribosomal protein uS19.

The protein resides in the cytoplasm. Its function is as follows. An accessory protein needed during the final step in the assembly of 30S ribosomal subunit, possibly for assembly of the head region. Essential for efficient processing of 16S rRNA. May be needed both before and after RbfA during the maturation of 16S rRNA. It has affinity for free ribosomal 30S subunits but not for 70S ribosomes. This is Ribosome maturation factor RimM from Shouchella clausii (strain KSM-K16) (Alkalihalobacillus clausii).